Consider the following 36-residue polypeptide: U1-ectatotoxin-Et1b subunit B (36 aa).

A disulfide bond links Cys11 and Cys33.

It belongs to the ectatomin family. Ectatomin-Et subfamily. As to quaternary structure, heterodimer of subunits A and B; disulfide-linked. Expressed by the venom gland.

The protein resides in the secreted. Its subcellular location is the target cell membrane. The chain is U1-ectatotoxin-Et1b subunit B from Ectatomma tuberculatum (Selva ant).